The primary structure comprises 503 residues: Probable cytosol aminopeptidase (503 aa).

Mn(2+) is bound by residues Lys-274 and Asp-279. Lys-286 is a catalytic residue. Residues Asp-297, Asp-356, and Glu-358 each contribute to the Mn(2+) site. Arg-360 is an active-site residue.

The protein belongs to the peptidase M17 family. The cofactor is Mn(2+).

It localises to the cytoplasm. The enzyme catalyses Release of an N-terminal amino acid, Xaa-|-Yaa-, in which Xaa is preferably Leu, but may be other amino acids including Pro although not Arg or Lys, and Yaa may be Pro. Amino acid amides and methyl esters are also readily hydrolyzed, but rates on arylamides are exceedingly low.. It catalyses the reaction Release of an N-terminal amino acid, preferentially leucine, but not glutamic or aspartic acids.. Presumably involved in the processing and regular turnover of intracellular proteins. Catalyzes the removal of unsubstituted N-terminal amino acids from various peptides. This chain is Probable cytosol aminopeptidase, found in Burkholderia orbicola (strain MC0-3).